Reading from the N-terminus, the 666-residue chain is uncharacterized protein (666 aa).

Belongs to the MG032/MG096/MG288 family.

This is an uncharacterized protein from Mycoplasma genitalium (strain ATCC 33530 / DSM 19775 / NCTC 10195 / G37) (Mycoplasmoides genitalium).